Reading from the N-terminus, the 154-residue chain is Interleukin-2 (154 aa).

The signal sequence occupies residues 1 to 20 (MYRMQLLSCIALSLALVTNS). O-linked (GalNAc...) threonine glycosylation occurs at threonine 23. A disulfide bond links cysteine 78 and cysteine 126.

The protein belongs to the IL-2 family.

It localises to the secreted. Its function is as follows. Cytokine produced by activated CD4-positive helper T-cells and to a lesser extend activated CD8-positive T-cells and natural killer (NK) cells that plays pivotal roles in the immune response and tolerance. Binds to a receptor complex composed of either the high-affinity trimeric IL-2R (IL2RA/CD25, IL2RB/CD122 and IL2RG/CD132) or the low-affinity dimeric IL-2R (IL2RB and IL2RG). Interaction with the receptor leads to oligomerization and conformation changes in the IL-2R subunits resulting in downstream signaling starting with phosphorylation of JAK1 and JAK3. In turn, JAK1 and JAK3 phosphorylate the receptor to form a docking site leading to the phosphorylation of several substrates including STAT5. This process leads to activation of several pathways including STAT, phosphoinositide-3-kinase/PI3K and mitogen-activated protein kinase/MAPK pathways. Functions as a T-cell growth factor and can increase NK-cell cytolytic activity as well. Promotes strong proliferation of activated B-cells and subsequently immunoglobulin production. Plays a pivotal role in regulating the adaptive immune system by controlling the survival and proliferation of regulatory T-cells, which are required for the maintenance of immune tolerance. Moreover, participates in the differentiation and homeostasis of effector T-cell subsets, including Th1, Th2, Th17 as well as memory CD8-positive T-cells. The polypeptide is Interleukin-2 (IL2) (Macaca mulatta (Rhesus macaque)).